The chain runs to 516 residues: GMP synthase [glutamine-hydrolyzing] (516 aa).

Residues 8–198 (KILILDFGSQ…VVNICGCDTL (191 aa)) form the Glutamine amidotransferase type-1 domain. Residue C84 is the Nucleophile of the active site. Residues H172 and E174 contribute to the active site. The GMPS ATP-PPase domain maps to 199–391 (WNIENIIEND…LGLPYNMLYR (193 aa)). ATP is bound at residue 226-232 (SGGVDSS).

In terms of assembly, homodimer.

The catalysed reaction is XMP + L-glutamine + ATP + H2O = GMP + L-glutamate + AMP + diphosphate + 2 H(+). It functions in the pathway purine metabolism; GMP biosynthesis; GMP from XMP (L-Gln route): step 1/1. Catalyzes the synthesis of GMP from XMP. The chain is GMP synthase [glutamine-hydrolyzing] from Francisella tularensis subsp. tularensis (strain FSC 198).